The sequence spans 500 residues: Protein nucleotidyltransferase YdiU (500 aa).

Positions 98, 100, 101, 124, 136, 137, 187, and 194 each coordinate ATP. D263 functions as the Proton acceptor in the catalytic mechanism. N264 and D273 together coordinate Mg(2+). ATP is bound at residue D273.

Belongs to the SELO family. The cofactor is Mg(2+). Mn(2+) is required as a cofactor.

The catalysed reaction is L-seryl-[protein] + ATP = 3-O-(5'-adenylyl)-L-seryl-[protein] + diphosphate. The enzyme catalyses L-threonyl-[protein] + ATP = 3-O-(5'-adenylyl)-L-threonyl-[protein] + diphosphate. It carries out the reaction L-tyrosyl-[protein] + ATP = O-(5'-adenylyl)-L-tyrosyl-[protein] + diphosphate. It catalyses the reaction L-histidyl-[protein] + UTP = N(tele)-(5'-uridylyl)-L-histidyl-[protein] + diphosphate. The catalysed reaction is L-seryl-[protein] + UTP = O-(5'-uridylyl)-L-seryl-[protein] + diphosphate. The enzyme catalyses L-tyrosyl-[protein] + UTP = O-(5'-uridylyl)-L-tyrosyl-[protein] + diphosphate. Nucleotidyltransferase involved in the post-translational modification of proteins. It can catalyze the addition of adenosine monophosphate (AMP) or uridine monophosphate (UMP) to a protein, resulting in modifications known as AMPylation and UMPylation. In Herminiimonas arsenicoxydans, this protein is Protein nucleotidyltransferase YdiU.